Reading from the N-terminus, the 611-residue chain is tRNA uridine 5-carboxymethylaminomethyl modification enzyme MnmG (611 aa).

14 to 19 provides a ligand contact to FAD; it reads GAGHAG. 274 to 288 provides a ligand contact to NAD(+); that stretch reads GPRYCPSIEDKIVKF.

The protein belongs to the MnmG family. In terms of assembly, homodimer. Heterotetramer of two MnmE and two MnmG subunits. The cofactor is FAD.

The protein resides in the cytoplasm. Its function is as follows. NAD-binding protein involved in the addition of a carboxymethylaminomethyl (cmnm) group at the wobble position (U34) of certain tRNAs, forming tRNA-cmnm(5)s(2)U34. The chain is tRNA uridine 5-carboxymethylaminomethyl modification enzyme MnmG from Chlamydia caviae (strain ATCC VR-813 / DSM 19441 / 03DC25 / GPIC) (Chlamydophila caviae).